We begin with the raw amino-acid sequence, 74 residues long: UPF0435 protein BAA_0470 (74 aa).

The protein belongs to the UPF0435 family.

This is UPF0435 protein BAA_0470 from Bacillus anthracis (strain A0248).